A 296-amino-acid chain; its full sequence is HVA22-like protein i (296 aa).

Residues 146–296 (STPRPQPPQK…LRKTRSEESR (151 aa)) are disordered. The span at 180–193 (VSLSSSSSSSSSEN) shows a compositional bias: low complexity. Residues 223-233 (AGTTQIAQKSV) are compositionally biased toward polar residues. Positions 251–261 (QIEEVEGEAES) are enriched in acidic residues. A compositionally biased stretch (basic and acidic residues) spans 270-281 (GPKETVMEETIR).

The protein belongs to the DP1 family.

The sequence is that of HVA22-like protein i (HVA22I) from Arabidopsis thaliana (Mouse-ear cress).